A 714-amino-acid chain; its full sequence is Structure-specific endonuclease subunit SLX4 2 (714 aa).

Basic and acidic residues-rich tracts occupy residues 1–14 (MSPE…EDNL) and 24–34 (IHEETLAEESH). 2 disordered regions span residues 1 to 114 (MSPE…EQQG) and 338 to 369 (SSGP…KTPQ). Positions 36–46 (QAIQRSISRLS) are enriched in polar residues. A compositionally biased stretch (basic residues) spans 79–92 (KTKKRKLKVSKPRK).

This sequence belongs to the SLX4 family. As to quaternary structure, forms a heterodimer with SLX1. In terms of processing, phosphorylated in response to DNA damage.

The protein resides in the nucleus. Regulatory subunit of the SLX1-SLX4 structure-specific endonuclease that resolves DNA secondary structures generated during DNA repair and recombination. Has endonuclease activity towards branched DNA substrates, introducing single-strand cuts in duplex DNA close to junctions with ss-DNA. In Candida tropicalis (strain ATCC MYA-3404 / T1) (Yeast), this protein is Structure-specific endonuclease subunit SLX4 2.